Consider the following 91-residue polypeptide: uncharacterized protein (91 aa).

Helical transmembrane passes span 9-29 (VLWG…PFLP), 44-64 (LTVN…VFAW), and 71-91 (QFVF…CLAL).

Its subcellular location is the cell membrane. This is an uncharacterized protein from Bacillus subtilis (strain 168).